The sequence spans 528 residues: Probable GTP-binding protein OBGM, mitochondrial (528 aa).

Residues 1 to 45 (MWRRQHALLRRISLPKPPAATGIGCYYATEPEGRKPKTAPLQSRG) constitute a mitochondrion transit peptide. An Obg domain is found at 46–339 (MVDRFRLRAK…TYLILELKSI (294 aa)). Disordered regions lie at residues 52–87 (LRAK…RGGD) and 167–212 (HSPF…NHRG). Over residues 77–86 (PDGGNGGRGG) the composition is skewed to gly residues. Basic and acidic residues predominate over residues 197 to 207 (NTAENDCERGN). The region spanning 340 to 513 (ADVGLVGMPN…LRVGLRDLMD (174 aa)) is the OBG-type G domain. GTP is bound by residues 346-353 (GMPNAGKS) and 393-397 (DIPGL).

This sequence belongs to the TRAFAC class OBG-HflX-like GTPase superfamily. OBG GTPase family.

It localises to the mitochondrion. In terms of biological role, may bind GTP and have GTPase activity. The chain is Probable GTP-binding protein OBGM, mitochondrial (OBGM) from Oryza sativa subsp. japonica (Rice).